The sequence spans 364 residues: Phospho-N-acetylmuramoyl-pentapeptide-transferase (364 aa).

The next 10 membrane-spanning stretches (helical) occupy residues alanine 3–isoleucine 23, threonine 51–isoleucine 71, alanine 80–isoleucine 100, methionine 116–glutamate 136, isoleucine 154–alanine 174, leucine 185–isoleucine 205, proline 229–tryptophan 249, isoleucine 256–leucine 276, leucine 281–valine 301, and phenylalanine 341–valine 361.

The protein belongs to the glycosyltransferase 4 family. MraY subfamily. It depends on Mg(2+) as a cofactor.

The protein localises to the cell membrane. It catalyses the reaction UDP-N-acetyl-alpha-D-muramoyl-L-alanyl-gamma-D-glutamyl-meso-2,6-diaminopimeloyl-D-alanyl-D-alanine + di-trans,octa-cis-undecaprenyl phosphate = di-trans,octa-cis-undecaprenyl diphospho-N-acetyl-alpha-D-muramoyl-L-alanyl-D-glutamyl-meso-2,6-diaminopimeloyl-D-alanyl-D-alanine + UMP. The protein operates within cell wall biogenesis; peptidoglycan biosynthesis. Its function is as follows. Catalyzes the initial step of the lipid cycle reactions in the biosynthesis of the cell wall peptidoglycan: transfers peptidoglycan precursor phospho-MurNAc-pentapeptide from UDP-MurNAc-pentapeptide onto the lipid carrier undecaprenyl phosphate, yielding undecaprenyl-pyrophosphoryl-MurNAc-pentapeptide, known as lipid I. The sequence is that of Phospho-N-acetylmuramoyl-pentapeptide-transferase from Nocardioides sp. (strain ATCC BAA-499 / JS614).